The chain runs to 635 residues: Frizzled and smoothened-like protein C (635 aa).

Positions 1–20 (MKFKLIIFIIIIYIIKILKS) are cleaved as a signal peptide. Topologically, residues 21 to 244 (EILNEFGYGL…NKWVQMYKMS (224 aa)) are extracellular. Positions 32–166 (DENLKCLSFI…LTKYGYTENN (135 aa)) constitute an FZ domain. 2 disulfide bridges follow: cysteine 37–cysteine 108 and cysteine 50–cysteine 101. N-linked (GlcNAc...) asparagine glycans are attached at residues asparagine 65, asparagine 141, asparagine 156, asparagine 185, and asparagine 203. A helical membrane pass occupies residues 245–265 (IVLSTLSFICSIYNIITFGLL). The Cytoplasmic portion of the chain corresponds to 266–275 (SKLKSKYNLC). Residues 276 to 296 (ITFFSVSTVLMSLMDIVTYGI) form a helical membrane-spanning segment. At 297-314 (GYEELLCPESGRYAIQSD) the chain is on the extracellular side. The chain crosses the membrane as a helical span at residues 315-335 (VACGVTGAFFHIGITTGVLWW). Topologically, residues 336-356 (TTMSICLYSEVKRFKMISFRY) are cytoplasmic. Residues 357-377 (IIIFNSVISLILLIIPLSGQA) form a helical membrane-spanning segment. Over 378-398 (FMSGNGSLGCWIRKTWYANGT) the chain is Extracellular. 2 N-linked (GlcNAc...) asparagine glycosylation sites follow: asparagine 382 and asparagine 396. A helical membrane pass occupies residues 399–419 (FWIPCGISLFIGAICIVLVIY). Residues 420-440 (EIFKISRNLSKDNKPLMFQIR) are Cytoplasmic-facing. The chain crosses the membrane as a helical span at residues 441–461 (PFLCVLLVGGSFLYLFIFYFN). At 462–496 (NERNLDKYKAAIPSYVQCLLSSDENGEDCLTDGPG) the chain is on the extracellular side. Residues 497-517 (FGAYFTFYFFTRLFGITSFSI) traverse the membrane as a helical segment. Residues 518-635 (YGTSKIARDI…SSKDSNTNSF (118 aa)) lie on the Cytoplasmic side of the membrane. Residues 559–594 (SISGSNQKRFNRNGSNFNMKQNKSNPNDSISLSVVE) are compositionally biased toward polar residues. The segment at 559 to 635 (SISGSNQKRF…SSKDSNTNSF (77 aa)) is disordered. Residues 594–623 (ESTKKQDTENELESNIETKENRSTDISIEN) are a coiled coil. Positions 623-635 (NTTSSKDSNTNSF) are enriched in low complexity.

Belongs to the G-protein coupled receptor Fz/Smo family.

The protein resides in the membrane. In Dictyostelium discoideum (Social amoeba), this protein is Frizzled and smoothened-like protein C (fslC).